Consider the following 96-residue polypeptide: Large ribosomal subunit protein bL25 (96 aa).

The protein belongs to the bacterial ribosomal protein bL25 family. In terms of assembly, part of the 50S ribosomal subunit; part of the 5S rRNA/L5/L18/L25 subcomplex. Contacts the 5S rRNA. Binds to the 5S rRNA independently of L5 and L18.

This is one of the proteins that binds to the 5S RNA in the ribosome where it forms part of the central protuberance. The sequence is that of Large ribosomal subunit protein bL25 from Francisella tularensis subsp. holarctica (strain FTNF002-00 / FTA).